We begin with the raw amino-acid sequence, 382 residues long: Innexin-8 (382 aa).

4 consecutive transmembrane segments (helical) span residues 29–49 (LITAFLFITAAILTSAKTYVG), 103–123 (QWSSMYLAVAGIAFMIPKFLW), 187–207 (VIKILYLVNAIAQFVIIAIFL), and 270–290 (IFLFFWFWLVFLVFSTLIAHF).

It belongs to the pannexin family.

The protein localises to the cell membrane. Its subcellular location is the cell junction. The protein resides in the gap junction. Structural component of the gap junctions. The protein is Innexin-8 (inx-8) of Caenorhabditis elegans.